The chain runs to 213 residues: mRNA-decapping protein D9 (213 aa).

In terms of domain architecture, Nudix hydrolase spans 30–209 (KDTHVFAACI…EYLSYIYNML (180 aa)). A Nudix box motif is present at residues 111 to 132 (GKLDKKESIKDCLRRELKEESD). Glutamate 117 provides a ligand contact to Mg(2+). The active-site Nucleophile is the glutamate 126. Residues glutamate 130 and aspartate 151 each coordinate Mg(2+).

This sequence belongs to the Nudix hydrolase family. It depends on Mg(2+) as a cofactor. The cofactor is Mn(2+).

In terms of biological role, decapping enzyme required for the removal of the 5'-end m7GpppN cap tethered to viral and host mRNAs to allow their decay in cells. May therefore accelerate viral and cellular mRNA turnover to eliminate competing host mRNAs and allow stage-specific synthesis of viral proteins. Acceleration of the turnover of cellular transcripts may even promote the shutoff of host protein synthesis. Does not cleave unmethylated RNAs or RNAs shorter than 24 nucleotides. This Homo sapiens (Human) protein is mRNA-decapping protein D9.